The following is a 281-amino-acid chain: MARSTSGVHQGHQARKRFGQNFLVDDGVIHAIVAAIDPQPDDVLVEIGPGLGALTVPLMERVPTLQVVELDRDLVARLQRRFGDKLIVHAGDALAFDFGTLHVPGRSLRIVGNLPYNISSPLLFHLSAFADRVRDQHFMLQKEVVDRMVAAPGSKAFSRLSVMLQVRYYMELVLEVPPGSFNPPPKVDSAVVRMIPWPADKSPYAPVDMRALGTVVTLAFSQRRKVLRNTLGSLREVIDFDALGFDLGRRAEEVPVADFVAVANALPAERIAGGAPDLNED.

6 residues coordinate S-adenosyl-L-methionine: asparagine 21, leucine 23, glycine 48, glutamate 69, aspartate 92, and asparagine 113.

This sequence belongs to the class I-like SAM-binding methyltransferase superfamily. rRNA adenine N(6)-methyltransferase family. RsmA subfamily.

It localises to the cytoplasm. The catalysed reaction is adenosine(1518)/adenosine(1519) in 16S rRNA + 4 S-adenosyl-L-methionine = N(6)-dimethyladenosine(1518)/N(6)-dimethyladenosine(1519) in 16S rRNA + 4 S-adenosyl-L-homocysteine + 4 H(+). In terms of biological role, specifically dimethylates two adjacent adenosines (A1518 and A1519) in the loop of a conserved hairpin near the 3'-end of 16S rRNA in the 30S particle. May play a critical role in biogenesis of 30S subunits. This is Ribosomal RNA small subunit methyltransferase A from Ralstonia nicotianae (strain ATCC BAA-1114 / GMI1000) (Ralstonia solanacearum).